An 81-amino-acid chain; its full sequence is Sulfur carrier protein TusA (81 aa).

Cys19 serves as the catalytic Cysteine persulfide intermediate.

This sequence belongs to the sulfur carrier protein TusA family. Interacts with IscS.

It is found in the cytoplasm. Its pathway is tRNA modification. Its function is as follows. Sulfur carrier protein involved in sulfur trafficking in the cell. Part of a sulfur-relay system required for 2-thiolation during synthesis of 2-thiouridine of the modified wobble base 5-methylaminomethyl-2-thiouridine (mnm(5)s(2)U) in tRNA. Interacts with IscS and stimulates its cysteine desulfurase activity. Accepts an activated sulfur from IscS, which is then transferred to TusD, and thus determines the direction of sulfur flow from IscS to 2-thiouridine formation. Also appears to be involved in sulfur transfer for the biosynthesis of molybdopterin. The polypeptide is Sulfur carrier protein TusA (Citrobacter koseri (strain ATCC BAA-895 / CDC 4225-83 / SGSC4696)).